An 859-amino-acid polypeptide reads, in one-letter code: Mycobactin import ATP-binding/permease protein IrtA (859 aa).

Residues 1 to 292 are Cytoplasmic-facing; the sequence is MARGLQGVML…SRLLAPLKLP (292 aa). An FAD-binding FR-type domain is found at 15–122; sequence ARDHTATVIE…MSLMGSSRFD (108 aa). FAD is bound by residues 70–73, 87–91, and 97–98; these read RAYT, DVVLH, and AS. A disordered region spans residues 247–267; that stretch reads HRATEPAATEPEVGAAPQPES. A helical transmembrane segment spans residues 293 to 313; the sequence is LVLSGVLAALVTLAQLAPFVL. Residues 293 to 575 form the ABC transmembrane type-1 domain; that stretch reads LVLSGVLAAL…IAYGLGGLRT (283 aa). Over 314 to 334 the chain is Periplasmic; sequence LVELSRLLVSGAGAHRLFTVG. A helical membrane pass occupies residues 335 to 355; the sequence is FAAVGLLGTGALLAAALTLWL. The Cytoplasmic segment spans residues 356–408; sequence HVIDARFARALRLRLLSKLSRLPLGWFTSRGSGSIKKLVTDDTLALHYLVTHA. A helical membrane pass occupies residues 409–429; sequence VPDAVAAVVAPVGVLVYLFVV. Residues 430–432 lie on the Periplasmic side of the membrane; sequence DWR. The helical transmembrane segment at 433–453 threads the bilayer; it reads VALVLFGPVLVYLTITSSLTI. The Cytoplasmic portion of the chain corresponds to 454–519; that stretch reads QSGPRIVQAQ…PLAGKKTLMD (66 aa). Residues 520 to 540 form a helical membrane-spanning segment; sequence LATRPATFLWLIAATGTLLVA. Topologically, residues 541-548 are periplasmic; that stretch reads THRMDPVN. The helical transmembrane segment at 549-569 threads the bilayer; that stretch reads LLPFMFLGTTFGARLLGIAYG. Residues 570 to 859 are Cytoplasmic-facing; it reads LGGLRTGLLA…AVAAAQDGTR (290 aa). The region spanning 610-843 is the ABC transporter domain; the sequence is VVFDHVTFGY…GGRYCRLWDT (234 aa). An ATP-binding site is contributed by 643–650; it reads GPSGSGKS.

This sequence belongs to the ABC transporter superfamily. Siderophore-Fe(3+) uptake transporter (SIUT) (TC 3.A.1.21) family. Forms a heterodimer with IrtB. FAD serves as cofactor.

Its subcellular location is the cell inner membrane. In terms of biological role, part of the ABC transporter complex IrtAB involved in the import of iron-bound mycobactin (Fe-MBT) and carboxymycobactin (Fe-cMBT). Mycobactins are then reduced by the siderophore interaction domain to facilitate iron release in the bacterial cell. Transmembrane domains (TMD) form a pore in the membrane and the ATP-binding domain (NBD) is responsible for energy generation. Required for replication in human macrophages and in mouse lungs. The sequence is that of Mycobactin import ATP-binding/permease protein IrtA (irtA) from Mycobacterium tuberculosis (strain ATCC 25618 / H37Rv).